The following is a 342-amino-acid chain: Sideroflexin-5 (342 aa).

Low complexity predominate over residues 1–24 (MADTATTASAASAAASASNASSDA). Residues 1–29 (MADTATTASAASAAASASNASSDAPPFQL) form a disordered region. 4 helical membrane-spanning segments follow: residues 105–125 (IFMP…VVGL), 165–185 (FIQG…GLNV), 256–276 (LTRV…MSML), and 289–309 (LLPV…PLAI).

It belongs to the sideroflexin family. As to expression, specifically expressed in the brain.

It localises to the mitochondrion inner membrane. The catalysed reaction is citrate(in) = citrate(out). In terms of biological role, mitochondrial amino-acid transporter. Transports citrate. Does not act as a serine transporter: not able to mediate transport of serine into mitochondria. In brown adipose tissue, plays a role in the regulation of UCP1-dependent thermogenesis probably by supporting mitochondrial glycerol-3-phosphate utilization. This chain is Sideroflexin-5, found in Rattus norvegicus (Rat).